An 874-amino-acid chain; its full sequence is Alanine--tRNA ligase (874 aa).

Residues H564, H568, C665, and H669 each coordinate Zn(2+).

The protein belongs to the class-II aminoacyl-tRNA synthetase family. Requires Zn(2+) as cofactor.

Its subcellular location is the cytoplasm. The enzyme catalyses tRNA(Ala) + L-alanine + ATP = L-alanyl-tRNA(Ala) + AMP + diphosphate. Functionally, catalyzes the attachment of alanine to tRNA(Ala) in a two-step reaction: alanine is first activated by ATP to form Ala-AMP and then transferred to the acceptor end of tRNA(Ala). Also edits incorrectly charged Ser-tRNA(Ala) and Gly-tRNA(Ala) via its editing domain. The chain is Alanine--tRNA ligase from Burkholderia lata (strain ATCC 17760 / DSM 23089 / LMG 22485 / NCIMB 9086 / R18194 / 383).